A 467-amino-acid polypeptide reads, in one-letter code: Pentatricopeptide repeat-containing protein At1g77170, mitochondrial (467 aa).

The N-terminal 30 residues, 1–30 (MFFSGLISKLHVHGTKRTNHFTIFHRLNHF), are a transit peptide targeting the mitochondrion. 9 PPR repeats span residues 81–115 (IAFLWNNIMRSYIRHESPLDAIQVYLGMVRSTVLP), 116–150 (DRYSLPIVIKAAVQIHDFTLGKELHSVAVRLGFVG), 151–181 (DEFCESGFITLYCKAGEFENARKVFDENPER), 182–216 (KLGSWNAIIGGLNHAGRANEAVEMFVDMKRSGLEP), 217–251 (DDFTMVSVTASCGGLGDLSLAFQLHKCVLQAKTEE), 254–284 (DIMMLNSLIDMYGKCGRMDLASHIFEEMRQR), 285–319 (NVVSWSSMIVGYAANGNTLEALECFRQMREFGVRP), 320–350 (NKITFVGVLSACVHGGLVEEGKTYFAMMKSE), and 356–386 (GLSHYGCIVDLLSRDGQLKEAKKVVEEMPMK). The segment at 391–466 (VWGCLMGGCE…IPAYSYASTT (76 aa)) is type E motif.

The protein belongs to the PPR family. PCMP-E subfamily.

The protein localises to the mitochondrion. The protein is Pentatricopeptide repeat-containing protein At1g77170, mitochondrial (PCMP-E21) of Arabidopsis thaliana (Mouse-ear cress).